The following is a 1197-amino-acid chain: Serine/threonine-protein kinase pakA (1197 aa).

Disordered stretches follow at residues 1–96, 328–383, 430–468, 485–543, and 562–819; these read MEEK…PIYR, QKED…KNID, REEE…EQRN, EEEE…NLMG, and NSSG…RVGT. Residues 19-30 are compositionally biased toward basic and acidic residues; it reads QKFEQFLDKTDK. The span at 34–49 shows a compositional bias: polar residues; the sequence is ATRNNYRGPVSSSTGI. Positions 51–69 are enriched in basic and acidic residues; the sequence is NDKEKKSHSYFKVREEGSN. A compositionally biased stretch (polar residues) spans 70-79; sequence KRPSSFSASN. Composition is skewed to low complexity over residues 80-94 and 346-381; these read PITP…SSPI and NNNN…NNKN. The segment covering 439 to 458 has biased composition (basic and acidic residues); the sequence is RVERELASRRRQEEDRIKRE. The span at 494–523 shows a compositional bias: low complexity; sequence SQLQSSQQQQKSSSTQRSSNTVTSTSSSST. Positions 524 to 536 are enriched in polar residues; sequence GGDSNPSTSQKPT. Phosphothreonine; by PKB is present on threonine 585. Over residues 593–615 the composition is skewed to polar residues; it reads SENTPLVSSIDNNGVNNKMSRSH. 2 stretches are compositionally biased toward low complexity: residues 636-653 and 671-707; these read NVNN…NNNH and SSSM…SSPT. Residues 718–727 show a composition bias toward polar residues; that stretch reads TTSTGSTRKG. A compositionally biased stretch (basic and acidic residues) spans 728–737; it reads SISEREDKKK. Residues 739–756 show a composition bias toward low complexity; that stretch reads SSSSTSSSSSSNGGLSSS. The segment covering 757 to 790 has biased composition (basic and acidic residues); the sequence is GKDHKKDHSSEEKEKEKKSFFNKLFSKEKKDHHS. One can recognise a CRIB domain in the interval 817–830; it reads VGTPFNVKHDVHVN. In terms of domain architecture, Protein kinase spans 911–1164; sequence YYNINKIGEG…SSSLLHHPFL (254 aa). Residues 917-925 and lysine 940 contribute to the ATP site; that span reads IGEGGAGEV. Aspartate 1032 functions as the Proton acceptor in the catalytic mechanism.

It belongs to the protein kinase superfamily. STE Ser/Thr protein kinase family. STE20 subfamily. Mg(2+) is required as a cofactor. Phosphorylation on Thr-585 results in cAMP-mediated activation and localization to the cytoskeleton. Colocalizes with myosin II to the cleavage furrow of cells undergoing cytokinesis and the posterior cortex of polarized cells.

The protein localises to the cytoplasm. The protein resides in the cytosol. It localises to the cytoskeleton. It catalyses the reaction L-seryl-[protein] + ATP = O-phospho-L-seryl-[protein] + ADP + H(+). The enzyme catalyses L-threonyl-[protein] + ATP = O-phospho-L-threonyl-[protein] + ADP + H(+). Regulator of the myosin II component of the cytoskeleton: required for regulation of cytokinesis. Functions during chemotaxis, required for maintaining the direction of cell movement, suppressing lateral pseudopod extension, and proper retraction of the posterior of chemotaxing cells. In Dictyostelium discoideum (Social amoeba), this protein is Serine/threonine-protein kinase pakA (pakA).